The sequence spans 487 residues: Serine carboxypeptidase-like 38 (487 aa).

The N-terminal stretch at Met-1–Ala-20 is a signal peptide. 3 disulfide bridges follow: Cys-119-Cys-368, Cys-280-Cys-290, and Cys-315-Cys-336. The active site involves Ser-215. Residue Asn-233 is glycosylated (N-linked (GlcNAc...) asparagine). 2 N-linked (GlcNAc...) asparagine glycosylation sites follow: Asn-317 and Asn-357. Asp-407 is an active-site residue. N-linked (GlcNAc...) asparagine glycosylation is found at Asn-423 and Asn-449. The active site involves His-460.

This sequence belongs to the peptidase S10 family. Expressed in seedlings, roots, leaves, flowers and siliques.

Its subcellular location is the secreted. In terms of biological role, probable carboxypeptidase. In Arabidopsis thaliana (Mouse-ear cress), this protein is Serine carboxypeptidase-like 38 (SCPL38).